Here is a 398-residue protein sequence, read N- to C-terminus: MAACYNAYSAGSQSFEFDEDDDDASFDSGYEKSFETEAQLSSRRRLDFGTPPTPAIPQPYSGGTWDAVPLSSPPAGFVGLLDTSSNHSTRSGRTLVEHLNSRATNGVFDPPLTSTPVKSPEDPNAPRPKRKYAVGKNRVTRSRSPTQVVKIKRFRRMKANDRERNRMHNLNDALEKLRVTLPSLPEETKLTKIEILRFAHNYIFALEQVLESGGSINLDLEKLQNFTLSGERITKELFDALFVNPQPYPLFGRMFPYGQGMAPLAQHQTAPASHAEQPPAMGGFQHGMDYPQQPPGFDFTGSMRFYHQQQQQPHQPHHLQPNPQQESSPQQFSQEKYDLFRGSFDAAANLHSTNLDSGIHQQSSFYSQTPPWKDYPEDQAHVHPVPHQHSYKNFAPQV.

Disordered stretches follow at residues 35–59 and 102–144; these read ETEAQLSSRRRLDFGTPPTPAIPQP and RATN…RSRS. The span at 127–141 shows a compositional bias: basic residues; sequence RPKRKYAVGKNRVTR. One can recognise a bHLH domain in the interval 154–206; sequence FRRMKANDRERNRMHNLNDALEKLRVTLPSLPEETKLTKIEILRFAHNYIFAL. 2 disordered regions span residues 265–333 and 361–398; these read AQHQ…QQFS and QQSSFYSQTPPWKDYPEDQAHVHPVPHQHSYKNFAPQV. Residues 307–333 are compositionally biased toward low complexity; it reads HQQQQQPHQPHHLQPNPQQESSPQQFS. Polar residues predominate over residues 361 to 370; the sequence is QQSSFYSQTP.

Expressed in neuronal and glial precursors during differentiation. In the peripheral nervous system, expression is exclusively in one of the neurons that innervate each larval chemosensory organ. Expressed at a late stage in the development of one type of adult chemosensory organ, the gustatory bristles of the leg, wing and proboscis. Expressed very early in the development of a second type of chemosensory receptors, the olfactory organs of the antenna.

The protein resides in the nucleus. In terms of biological role, may play a role in the specification of the sugar-sensitive adult gustatory neuron and affect the response to sugar and salt. Regulated by POXN. This Drosophila melanogaster (Fruit fly) protein is Basic helix-loop-helix neural transcription factor TAP (tap).